The following is a 295-amino-acid chain: Giardin subunit alpha-1 (295 aa).

4 Annexin repeats span residues 2–71 (PKVT…MDLF), 73–143 (DRHE…MEKW), 153–223 (GSPE…AHFA), and 226–293 (GMHR…TLWR).

The protein belongs to the annexin family. Giardin subunit alpha subfamily.

The protein localises to the cytoplasm. Its subcellular location is the cytoskeleton. Its function is as follows. Giardins are involved in parasite attachment to the intestinal mucosa and in the cytoskeletal disassembly and reassembly that marks the transition from infectious trophozoite to transmissible cyst. They may interact with other cytoskeletal proteins such as microtubules in the microribbons or crossbridges, to maintain the integrity of the ventral disk. This is Giardin subunit alpha-1 from Giardia intestinalis (Giardia lamblia).